Reading from the N-terminus, the 60-residue chain is Beta-defensin 11 (60 aa).

Positions 1 to 22 (MRLHHLLLALLFLVLSAGSGIS) are cleaved as a signal peptide. 3 disulfide bridges follow: Cys27-Cys56, Cys34-Cys49, and Cys39-Cys57.

The protein belongs to the beta-defensin family. Neutrophilic granules.

The protein resides in the secreted. In terms of biological role, has bactericidal activity. Active against E.coli ML35 and S.aureus 502A. The chain is Beta-defensin 11 (DEFB11) from Bos taurus (Bovine).